The chain runs to 386 residues: N-acetylneuraminate epimerase (386 aa).

The signal sequence occupies residues Met1–Ala29. Kelch repeat units lie at residues Val51–Asn95, Glu97–Asn149, Thr151–Tyr186, Asn187–Asn232, Leu235–Ala284, Gln306–Asp355, and Val357–Lys386. Residue Glu241 is the Proton acceptor of the active site.

The protein belongs to the NanM family. As to quaternary structure, homodimer.

It localises to the periplasm. The enzyme catalyses N-acetyl-alpha-neuraminate = N-acetyl-beta-neuraminate. Converts alpha-N-acetylneuranimic acid (Neu5Ac) to the beta-anomer, accelerating the equilibrium between the alpha- and beta-anomers. Probably facilitates sialidase-negative bacteria to compete successfully for limited amounts of extracellular Neu5Ac, which is likely taken up in the beta-anomer. In addition, the rapid removal of sialic acid from solution might be advantageous to the bacterium to damp down host responses. This chain is N-acetylneuraminate epimerase, found in Salmonella choleraesuis (strain SC-B67).